Reading from the N-terminus, the 74-residue chain is uncharacterized protein (74 aa).

Its subcellular location is the mitochondrion. This is an uncharacterized protein from Marchantia polymorpha (Common liverwort).